A 667-amino-acid chain; its full sequence is Single-minded homolog 2 (667 aa).

In terms of domain architecture, bHLH spans 1–53 (MKEKSKNAAKTRREKENGEFYELAKLLPLPSAITSQLDKASIIRLTTSYLKMR). PAS domains follow at residues 77–149 (AKEL…LHHH) and 218–288 (PPSA…LVKG). Positions 292 to 335 (TKYYRLLSKRGGWVWVQSYATVVHNSRSSRPHCIVSVNYVLTEI) constitute a PAC domain. Residues 336–667 (EYKELQLSLE…GASVIITNGR (332 aa)) enclose the Single-minded C-terminal domain. Disordered stretches follow at residues 356–389 (WRTA…YPPQ), 409–428 (ASPP…SESS), and 500–520 (SSSS…RHSL). The Nuclear localization signal signature appears at 367 to 386 (RKLVKPKNTKMKTKLRTNPY). Over residues 369–381 (LVKPKNTKMKTKL) the composition is skewed to basic residues. Low complexity predominate over residues 409 to 419 (ASPPASAAAPP).

Efficient DNA binding requires dimerization with another bHLH protein. Heterodimer of SIM2 and ARNT.

The protein localises to the nucleus. Functionally, transcription factor that may be a master gene of CNS development in cooperation with Arnt. It may have pleiotropic effects in the tissues expressed during development. This Homo sapiens (Human) protein is Single-minded homolog 2 (SIM2).